The chain runs to 156 residues: Ribonuclease pancreatic (156 aa).

The first 28 residues, 1–28 (MALEKSLALLPLLVLVLLVLGWVQPSLG), serve as a signal peptide directing secretion. Residues 33-43 (AQKFQRQHMDS) show a composition bias toward basic and acidic residues. A disordered region spans residues 33 to 52 (AQKFQRQHMDSDGSPSSNPT). K35 and R38 together coordinate substrate. The active-site Proton acceptor is the H40. Cystine bridges form between C54–C112, C68–C123, C86–C138, and C93–C100. N-linked (GlcNAc...) asparagine glycosylation is present at N62. Substrate is bound by residues 69 to 73 (KPVNT), K94, and R113. A glycan (N-linked (GlcNAc...) asparagine) is linked at N116. H147 (proton donor) is an active-site residue.

This sequence belongs to the pancreatic ribonuclease family. As to quaternary structure, monomer. Interacts with and forms tight 1:1 complexes with RNH1. Dimerization of two such complexes may occur. Interaction with RNH1 inhibits this protein.

It localises to the secreted. The catalysed reaction is an [RNA] containing cytidine + H2O = an [RNA]-3'-cytidine-3'-phosphate + a 5'-hydroxy-ribonucleotide-3'-[RNA].. It carries out the reaction an [RNA] containing uridine + H2O = an [RNA]-3'-uridine-3'-phosphate + a 5'-hydroxy-ribonucleotide-3'-[RNA].. Its function is as follows. Endonuclease that catalyzes the cleavage of RNA on the 3' side of pyrimidine nucleotides. Acts on single-stranded and double-stranded RNA. In Saguinus oedipus (Cotton-top tamarin), this protein is Ribonuclease pancreatic (RNASE1).